A 396-amino-acid polypeptide reads, in one-letter code: Phosphoglycerate kinase (396 aa).

Residues 21–23, arginine 36, 59–62, arginine 118, and arginine 151 contribute to the substrate site; these read DFN and HFDR. ATP contacts are provided by residues lysine 201, glutamate 323, and 353–356; that span reads GGDT.

It belongs to the phosphoglycerate kinase family. In terms of assembly, monomer.

It localises to the cytoplasm. It carries out the reaction (2R)-3-phosphoglycerate + ATP = (2R)-3-phospho-glyceroyl phosphate + ADP. It participates in carbohydrate degradation; glycolysis; pyruvate from D-glyceraldehyde 3-phosphate: step 2/5. The sequence is that of Phosphoglycerate kinase from Caulobacter sp. (strain K31).